The primary structure comprises 246 residues: tRNA (guanine-N(7)-)-methyltransferase (246 aa).

Residues glutamate 77, glutamate 102, aspartate 129, and aspartate 152 each coordinate S-adenosyl-L-methionine. The active site involves aspartate 152. Substrate contacts are provided by residues lysine 156, aspartate 188, and 225–228; that span reads TKFE.

It belongs to the class I-like SAM-binding methyltransferase superfamily. TrmB family.

The enzyme catalyses guanosine(46) in tRNA + S-adenosyl-L-methionine = N(7)-methylguanosine(46) in tRNA + S-adenosyl-L-homocysteine. It functions in the pathway tRNA modification; N(7)-methylguanine-tRNA biosynthesis. Its function is as follows. Catalyzes the formation of N(7)-methylguanine at position 46 (m7G46) in tRNA. In Haemophilus influenzae (strain PittGG), this protein is tRNA (guanine-N(7)-)-methyltransferase.